The sequence spans 122 residues: Large ribosomal subunit protein uL18 (122 aa).

It belongs to the universal ribosomal protein uL18 family. As to quaternary structure, part of the 50S ribosomal subunit; part of the 5S rRNA/L5/L18/L25 subcomplex. Contacts the 5S and 23S rRNAs.

In terms of biological role, this is one of the proteins that bind and probably mediate the attachment of the 5S RNA into the large ribosomal subunit, where it forms part of the central protuberance. The sequence is that of Large ribosomal subunit protein uL18 from Dictyoglomus turgidum (strain DSM 6724 / Z-1310).